The following is a 145-amino-acid chain: Aspartate 1-decarboxylase (145 aa).

S25 (schiff-base intermediate with substrate; via pyruvic acid) is an active-site residue. Position 25 is a pyruvic acid (Ser) (S25). T57 lines the substrate pocket. Residue Y58 is the Proton donor of the active site. Residue 73–75 (GAA) coordinates substrate.

This sequence belongs to the PanD family. Heterooctamer of four alpha and four beta subunits. It depends on pyruvate as a cofactor. Post-translationally, is synthesized initially as an inactive proenzyme, which is activated by self-cleavage at a specific serine bond to produce a beta-subunit with a hydroxyl group at its C-terminus and an alpha-subunit with a pyruvoyl group at its N-terminus.

The protein localises to the cytoplasm. It carries out the reaction L-aspartate + H(+) = beta-alanine + CO2. It participates in cofactor biosynthesis; (R)-pantothenate biosynthesis; beta-alanine from L-aspartate: step 1/1. Catalyzes the pyruvoyl-dependent decarboxylation of aspartate to produce beta-alanine. The chain is Aspartate 1-decarboxylase from Micrococcus luteus (strain ATCC 4698 / DSM 20030 / JCM 1464 / CCM 169 / CCUG 5858 / IAM 1056 / NBRC 3333 / NCIMB 9278 / NCTC 2665 / VKM Ac-2230) (Micrococcus lysodeikticus).